A 367-amino-acid polypeptide reads, in one-letter code: Chorismate synthase (367 aa).

Positions 41–60 (FTHDLQRRASGKSRHTSARR) are disordered. Residues Arg48 and Arg54 each contribute to the NADP(+) site. Residues 125-127 (RSS), 238-239 (NA), Gly278, 293-297 (KPTSS), and Arg319 each bind FMN.

This sequence belongs to the chorismate synthase family. In terms of assembly, homotetramer. FMNH2 is required as a cofactor.

It carries out the reaction 5-O-(1-carboxyvinyl)-3-phosphoshikimate = chorismate + phosphate. It functions in the pathway metabolic intermediate biosynthesis; chorismate biosynthesis; chorismate from D-erythrose 4-phosphate and phosphoenolpyruvate: step 7/7. Functionally, catalyzes the anti-1,4-elimination of the C-3 phosphate and the C-6 proR hydrogen from 5-enolpyruvylshikimate-3-phosphate (EPSP) to yield chorismate, which is the branch point compound that serves as the starting substrate for the three terminal pathways of aromatic amino acid biosynthesis. This reaction introduces a second double bond into the aromatic ring system. The chain is Chorismate synthase from Xanthomonas euvesicatoria pv. vesicatoria (strain 85-10) (Xanthomonas campestris pv. vesicatoria).